An 804-amino-acid polypeptide reads, in one-letter code: Protein translocase subunit SecA (804 aa).

ATP is bound by residues Q100, 118–122 (GEGKT), and D508.

It belongs to the SecA family. As to quaternary structure, monomer and homodimer. Part of the essential Sec protein translocation apparatus which comprises SecA, SecYEG and auxiliary proteins SecDF. Other proteins may also be involved.

It is found in the cell membrane. The protein localises to the cytoplasm. It carries out the reaction ATP + H2O + cellular proteinSide 1 = ADP + phosphate + cellular proteinSide 2.. In terms of biological role, part of the Sec protein translocase complex. Interacts with the SecYEG preprotein conducting channel. Has a central role in coupling the hydrolysis of ATP to the transfer of proteins into and across the cell membrane, serving as an ATP-driven molecular motor driving the stepwise translocation of polypeptide chains across the membrane. This Leuconostoc citreum (strain KM20) protein is Protein translocase subunit SecA.